A 563-amino-acid polypeptide reads, in one-letter code: Germacrene-A synthase (563 aa).

Mg(2+) is bound by residues aspartate 316, aspartate 320, aspartate 460, threonine 464, and glutamate 468. The DDXXD motif motif lies at 316–320 (DDTYD).

This sequence belongs to the terpene synthase family. Tpsa subfamily. The cofactor is Mg(2+). Mn(2+) is required as a cofactor. As to expression, high expression in disk florets, moderate expression in ray florets and detected in leaves and stems, but not in roots.

The catalysed reaction is (2E,6E)-farnesyl diphosphate = (+)-(R)-germacrene A + diphosphate. It functions in the pathway secondary metabolite biosynthesis; terpenoid biosynthesis. In terms of biological role, sesquiterpene synthase involved in germacrene A biosynthesis. May be involved in the biosynthesis of the sesquiterpene lactone matricine, one of the major active compounds of chamomile flowers. The protein is Germacrene-A synthase of Matricaria chamomilla var. recutita (German chamomile).